A 593-amino-acid chain; its full sequence is MVKRHKNTIGVWRLGKTLGTGSTSCVRLAKHAKTGDLAAIKIIPIRYASIGMEILMMRLLRHPNILRLYDVWTDHQHMYLALEYVPDGELFHYIRKHGPLSEREAAHYLSQILDAVAHCHRFRFRHRDLKLENILIKVNEQQIKIADFGMATVEPNDSCLENYCGSLHYLAPEIVSHKPYRGAPADVWSCGVILYSLLSNKLPFGGQNTDVIYNKIRHGAYDLPSSISSAAQDLLHRMLDVNPSTRITIPEVFSHPFLMGCTSLSSMDSTTPPTPSLSIDEIDPLVVDCMCVLWKKSSSKKVVRRLQQRDDNDEKYVYKVLSEILRDDMLKKQRFDENKYLSLYDLIHDNNLFTKASISTTSLVKSNVSTNSRKSSNFEDELARRVSSPLSALNQMSQSPIPIRVSSDKDYDSYACHEVVSNPSTLDDDYNYMFVCPPEEYTYSTDNVRTDSLDLQSLPTPTLEQLESVPFNRYGYVRIFPSTTLSSTASGYYTPDSLSTPEPSIDGLTNLDDVQVGGFVQGSGNQNRRPISFPVISNMQPNITNVRSASAPLCSSPVPSRRYSQYATNARYTPRKVSSGSVLRKISSFFRKD.

Residues 12–258 (WRLGKTLGTG…IPEVFSHPFL (247 aa)) enclose the Protein kinase domain. ATP-binding positions include 18-26 (LGTGSTSCV) and K41. The active-site Proton acceptor is the D128. Residue S550 is modified to Phosphoserine.

It belongs to the protein kinase superfamily. CAMK Ser/Thr protein kinase family. NIM1 subfamily. As to quaternary structure, interacts with msp1.

The enzyme catalyses L-seryl-[protein] + ATP = O-phospho-L-seryl-[protein] + ADP + H(+). It carries out the reaction L-threonyl-[protein] + ATP = O-phospho-L-threonyl-[protein] + ADP + H(+). Its function is as follows. This protein, a dose-dependent mitotic inducer, appears to function as a negative regulator of mitosis inhibitor wee1 by phosphorylating and inactivating it. The polypeptide is Mitosis inducer protein kinase cdr1 (cdr1) (Schizosaccharomyces pombe (strain 972 / ATCC 24843) (Fission yeast)).